We begin with the raw amino-acid sequence, 219 residues long: UPF0502 protein Gura_3445 (219 aa).

The interval 162-181 is disordered; it reads AGEPDLPDDTPAPPPEPARQ.

The protein belongs to the UPF0502 family.

The protein is UPF0502 protein Gura_3445 of Geotalea uraniireducens (strain Rf4) (Geobacter uraniireducens).